A 449-amino-acid polypeptide reads, in one-letter code: Tubulin alpha chain (449 aa).

Residue Q11 coordinates GTP. Residue K40 is modified to N6-acetyllysine. 7 residues coordinate GTP: E71, S140, G144, T145, T179, N206, and N228. E71 contributes to the Mg(2+) binding site. E254 is an active-site residue.

It belongs to the tubulin family. In terms of assembly, dimer of alpha and beta chains. A typical microtubule is a hollow water-filled tube with an outer diameter of 25 nm and an inner diameter of 15 nM. Alpha-beta heterodimers associate head-to-tail to form protofilaments running lengthwise along the microtubule wall with the beta-tubulin subunit facing the microtubule plus end conferring a structural polarity. Microtubules usually have 13 protofilaments but different protofilament numbers can be found in some organisms and specialized cells. The cofactor is Mg(2+). Undergoes a tyrosination/detyrosination cycle, the cyclic removal and re-addition of a C-terminal tyrosine residue by the enzymes tubulin tyrosine carboxypeptidase (TTCP) and tubulin tyrosine ligase (TTL), respectively. In terms of processing, acetylation of alpha chains at Lys-40 stabilizes microtubules and affects affinity and processivity of microtubule motors. This modification has a role in multiple cellular functions, ranging from cell motility, cell cycle progression or cell differentiation to intracellular trafficking and signaling.

It is found in the cytoplasm. It localises to the cytoskeleton. The catalysed reaction is GTP + H2O = GDP + phosphate + H(+). In terms of biological role, tubulin is the major constituent of microtubules, a cylinder consisting of laterally associated linear protofilaments composed of alpha- and beta-tubulin heterodimers. Microtubules grow by the addition of GTP-tubulin dimers to the microtubule end, where a stabilizing cap forms. Below the cap, tubulin dimers are in GDP-bound state, owing to GTPase activity of alpha-tubulin. The chain is Tubulin alpha chain from Tetrahymena pyriformis.